Consider the following 4963-residue polypeptide: Kettin homolog (4963 aa).

Ig-like domains follow at residues 18-105 (PTFI…TCIL), 133-220 (PSAP…EAIS), and 303-392 (PIIR…ARIE). Disordered regions lie at residues 396–420 (LSVP…QQQQ), 466–501 (RRQL…EEER), 557–578 (IRPH…RQEV), 598–622 (QLYQ…QQRF), and 652–696 (TNGG…GHEH). Basic and acidic residues-rich tracts occupy residues 399 to 417 (PDER…RDRQ), 466 to 475 (RRQLEHEKRL), and 484 to 501 (FERE…EEER). Positions 401–517 (ERRKENQLRE…KHLRQQQQTQ (117 aa)) form a coiled coil. Positions 557-576 (IRPHQQQQQHYQQQQQSPRQ) are enriched in low complexity. Residues 658-685 (AANGSAKTANGSANGSANGSAVHAANGG) show a composition bias toward low complexity. Ig-like domains lie at 706–796 (PQFL…FSLN), 806–893 (PEFT…GRVV), 937–1027 (PKFE…ANIA), 1065–1155 (PNFH…ATII), 1199–1281 (FHCE…AELT), 1462–1554 (PKFL…ITVT), 1594–1687 (PPTF…ATIR), 1728–1819 (PAFV…VDIN), 1992–2085 (PPVF…IFLE), 2126–2217 (PTFT…CTVK), 2258–2350 (PKFV…ANFT), 2391–2481 (PQFI…AQLT), 2522–2613 (PKFV…GQLS), 2654–2745 (PSFV…ANVG), 2787–2878 (PQWV…ATVT), 2919–3010 (PNFL…ASIR), 3051–3141 (PAIT…ATLK), 3182–3273 (PRFI…ATIE), 3314–3407 (PAIV…FEVS), and 3448–3539 (PVFI…TKLT). The cysteines at positions 827 and 877 are disulfide-linked. Residues Cys1201 and Cys1265 are joined by a disulfide bond. Cys1618 and Cys1671 are joined by a disulfide. 2 disulfide bridges follow: Cys2016–Cys2069 and Cys2148–Cys2201. Positions 3567–3583 (EAPRPAREDAPDADHGP) are enriched in basic and acidic residues. A disordered region spans residues 3567 to 3590 (EAPRPAREDAPDADHGPPKFTSAL). 5 consecutive Ig-like domains span residues 3584 to 3677 (PKFT…LKVV), 3720 to 3811 (PSFS…GKIA), 3821 to 3913 (PQVV…TKIT), 3962 to 4052 (PEFR…AKLA), and 4098 to 4185 (PQFT…ATLD). Cystine bridges form between Cys3606-Cys3659 and Cys3742-Cys3795. A required for F-actin binding region spans residues 4193 to 4963 (RQTKLRPANF…TSQAKLTLSR (771 aa)). A compositionally biased stretch (basic and acidic residues) spans 4319 to 4329 (DQQEVGWERPD). The interval 4319 to 4357 (DQQEVGWERPDWAGQDGTSKLPGADEGRFKKLPTPAPEL) is disordered. 4 Ig-like domains span residues 4546–4634 (PTIS…ANLT), 4645–4733 (PDFS…ARLN), 4752–4842 (PRFT…LVLT), and 4872–4960 (PHFI…AKLT).

Interacts (via Ig-like domains) with F-actin. As to expression, expressed in the pharyngeal, body wall, and anal depressor muscles. Expression in these muscles is higher in hermaphrodites than in males. Expressed in the vulva and the myoepithelial sheath of the proximal ovary. Expressed in the proximal gonad of males. Not expressed in the dense bodies of the obliquely striated body wall muscle.

It is found in the cytoplasm. The protein resides in the myofibril. The protein localises to the sarcomere. Its subcellular location is the cytoskeleton. Functionally, positively regulates actin filament organization and provides mechanical stability to the myofibrils during body wall muscle contraction. Required for the organization of sarcomeric actin filaments and myosin protein myo-3 in striated body wall muscle cells. Not required for assembly of dense bodies, which are a type of integrin-based adhesion structure that link the plasma membrane to thin filaments of myofibrils, in body wall muscle. Not required for the atn-1 protein to localize to the dense bodies. This chain is Kettin homolog, found in Caenorhabditis elegans.